The sequence spans 364 residues: Phospho-N-acetylmuramoyl-pentapeptide-transferase (364 aa).

10 consecutive transmembrane segments (helical) span residues 3 to 23 (AILF…RVAI), 51 to 71 (TMGG…AKLI), 80 to 100 (ALLL…DDFI), 116 to 136 (MIGL…SWLE), 154 to 174 (IGWI…IIAA), 185 to 205 (LDGL…FVNI), 229 to 249 (PLDL…FLWW), 256 to 276 (IFMG…LAIL), 281 to 301 (LLLI…MLQV), and 341 to 361 (FWII…AEWV).

Belongs to the glycosyltransferase 4 family. MraY subfamily. The cofactor is Mg(2+).

The protein localises to the cell membrane. The catalysed reaction is UDP-N-acetyl-alpha-D-muramoyl-L-alanyl-gamma-D-glutamyl-meso-2,6-diaminopimeloyl-D-alanyl-D-alanine + di-trans,octa-cis-undecaprenyl phosphate = di-trans,octa-cis-undecaprenyl diphospho-N-acetyl-alpha-D-muramoyl-L-alanyl-D-glutamyl-meso-2,6-diaminopimeloyl-D-alanyl-D-alanine + UMP. Its pathway is cell wall biogenesis; peptidoglycan biosynthesis. Functionally, catalyzes the initial step of the lipid cycle reactions in the biosynthesis of the cell wall peptidoglycan: transfers peptidoglycan precursor phospho-MurNAc-pentapeptide from UDP-MurNAc-pentapeptide onto the lipid carrier undecaprenyl phosphate, yielding undecaprenyl-pyrophosphoryl-MurNAc-pentapeptide, known as lipid I. The chain is Phospho-N-acetylmuramoyl-pentapeptide-transferase from Nocardioides sp. (strain ATCC BAA-499 / JS614).